We begin with the raw amino-acid sequence, 453 residues long: Enolase (453 aa).

Gln163 is a (2R)-2-phosphoglycerate binding site. Glu205 acts as the Proton donor in catalysis. Residues Asp258, Glu308, and Asp335 each coordinate Mg(2+). Lys360, Arg389, Ser390, and Lys411 together coordinate (2R)-2-phosphoglycerate. The Proton acceptor role is filled by Lys360.

This sequence belongs to the enolase family. Mg(2+) is required as a cofactor.

Its subcellular location is the cytoplasm. The protein localises to the secreted. It localises to the cell surface. It carries out the reaction (2R)-2-phosphoglycerate = phosphoenolpyruvate + H2O. It functions in the pathway carbohydrate degradation; glycolysis; pyruvate from D-glyceraldehyde 3-phosphate: step 4/5. Its function is as follows. Catalyzes the reversible conversion of 2-phosphoglycerate (2-PG) into phosphoenolpyruvate (PEP). It is essential for the degradation of carbohydrates via glycolysis. In Mesoplasma florum (strain ATCC 33453 / NBRC 100688 / NCTC 11704 / L1) (Acholeplasma florum), this protein is Enolase.